A 169-amino-acid chain; its full sequence is NADH-quinone oxidoreductase subunit B (169 aa).

[4Fe-4S] cluster is bound by residues C42, C43, C107, and C136.

Belongs to the complex I 20 kDa subunit family. In terms of assembly, NDH-1 is composed of 14 different subunits. Subunits NuoB, C, D, E, F, and G constitute the peripheral sector of the complex. Requires [4Fe-4S] cluster as cofactor.

The protein localises to the cell inner membrane. The enzyme catalyses a quinone + NADH + 5 H(+)(in) = a quinol + NAD(+) + 4 H(+)(out). Its function is as follows. NDH-1 shuttles electrons from NADH, via FMN and iron-sulfur (Fe-S) centers, to quinones in the respiratory chain. The immediate electron acceptor for the enzyme in this species is believed to be ubiquinone. Couples the redox reaction to proton translocation (for every two electrons transferred, four hydrogen ions are translocated across the cytoplasmic membrane), and thus conserves the redox energy in a proton gradient. The sequence is that of NADH-quinone oxidoreductase subunit B from Helicobacter hepaticus (strain ATCC 51449 / 3B1).